The sequence spans 644 residues: Exoribonuclease 2 (644 aa).

Residues 189–516 enclose the RNB domain; that stretch reads REDLTALDFV…NHRLLKAVIK (328 aa). The S1 motif domain occupies 561–643; that stretch reads DTRFAAEIVD…ETRSIIARPV (83 aa).

It belongs to the RNR ribonuclease family. RNase II subfamily.

The protein localises to the cytoplasm. The enzyme catalyses Exonucleolytic cleavage in the 3'- to 5'-direction to yield nucleoside 5'-phosphates.. Involved in mRNA degradation. Hydrolyzes single-stranded polyribonucleotides processively in the 3' to 5' direction. This chain is Exoribonuclease 2, found in Escherichia coli O127:H6 (strain E2348/69 / EPEC).